We begin with the raw amino-acid sequence, 39 residues long: Photosystem II reaction center protein Y (39 aa).

Residues 4–24 (RVIVVVSPLLIAATWAAINIG) form a helical membrane-spanning segment.

This sequence belongs to the PsbY family. PSII is composed of 1 copy each of membrane proteins PsbA, PsbB, PsbC, PsbD, PsbE, PsbF, PsbH, PsbI, PsbJ, PsbK, PsbL, PsbM, PsbT, PsbX, PsbY, PsbZ, Psb30/Ycf12, peripheral proteins PsbO, CyanoQ (PsbQ), PsbU, PsbV and a large number of cofactors. It forms dimeric complexes.

The protein resides in the cellular thylakoid membrane. In terms of biological role, loosely associated component of the core of photosystem II (PSII), it is not always seen in crystals. PSII is a light-driven water plastoquinone oxidoreductase, using light energy to abstract electrons from H(2)O, generating a proton gradient subsequently used for ATP formation. This Synechocystis sp. (strain ATCC 27184 / PCC 6803 / Kazusa) protein is Photosystem II reaction center protein Y.